The primary structure comprises 160 residues: 6-hydroxypseudooxynicotine dehydrogenase complex subunit beta (160 aa).

In terms of domain architecture, 2Fe-2S ferredoxin-type spans 4–80; that stretch reads FRLTVEVNGV…NSRIETVESL (77 aa). [2Fe-2S] cluster is bound by residues C42, C47, C50, C62, C101, C104, C137, and C139.

Heterohexamer of 2 alpha (kdhA), 2 beta (kdhB) and 2 gamma (kdhC) subunit. Dimer of heterotrimers. [2Fe-2S] cluster is required as a cofactor.

It carries out the reaction 6-hydroxypseudooxynicotine + A + H2O = 2,6-dihydroxypseudooxynicotine + AH2. The protein operates within alkaloid degradation; nicotine degradation. Functionally, molybdo-flavoprotein enzyme complex involved in nicotine degradation. The subunit gamma (large subunit) contains the substrate-binding sites, the subunit alpha (medium subunit) binds FAD and the subunit beta (small subunit) has a 2Fe-2S ferredoxin-type domain which binds 2 2Fe-2S clusters. In Paenarthrobacter nicotinovorans (Arthrobacter nicotinovorans), this protein is 6-hydroxypseudooxynicotine dehydrogenase complex subunit beta (kdhB).